Reading from the N-terminus, the 66-residue chain is Large ribosomal subunit protein bL33c (66 aa).

It belongs to the bacterial ribosomal protein bL33 family.

The protein resides in the plastid. It is found in the chloroplast. The sequence is that of Large ribosomal subunit protein bL33c from Citrus sinensis (Sweet orange).